We begin with the raw amino-acid sequence, 278 residues long: Diaminopimelate epimerase (278 aa).

Residues Asn-13, Gln-46, and Asn-66 each coordinate substrate. Cys-75 serves as the catalytic Proton donor. Residues 76–77 (GN), Asn-159, Asn-192, and 210–211 (ER) each bind substrate. Cys-219 acts as the Proton acceptor in catalysis. Position 220–221 (220–221 (GT)) interacts with substrate.

The protein belongs to the diaminopimelate epimerase family. As to quaternary structure, homodimer.

It localises to the cytoplasm. The catalysed reaction is (2S,6S)-2,6-diaminopimelate = meso-2,6-diaminopimelate. It functions in the pathway amino-acid biosynthesis; L-lysine biosynthesis via DAP pathway; DL-2,6-diaminopimelate from LL-2,6-diaminopimelate: step 1/1. Catalyzes the stereoinversion of LL-2,6-diaminopimelate (L,L-DAP) to meso-diaminopimelate (meso-DAP), a precursor of L-lysine and an essential component of the bacterial peptidoglycan. This chain is Diaminopimelate epimerase, found in Laribacter hongkongensis (strain HLHK9).